Reading from the N-terminus, the 466-residue chain is Argininosuccinate lyase (466 aa).

This sequence belongs to the lyase 1 family. Argininosuccinate lyase subfamily.

Its subcellular location is the cytoplasm. The enzyme catalyses 2-(N(omega)-L-arginino)succinate = fumarate + L-arginine. It functions in the pathway amino-acid biosynthesis; L-arginine biosynthesis; L-arginine from L-ornithine and carbamoyl phosphate: step 3/3. The protein is Argininosuccinate lyase of Brucella canis (strain ATCC 23365 / NCTC 10854 / RM-666).